Reading from the N-terminus, the 431-residue chain is Glutamate-1-semialdehyde 2,1-aminomutase (431 aa).

Residue lysine 269 is modified to N6-(pyridoxal phosphate)lysine.

This sequence belongs to the class-III pyridoxal-phosphate-dependent aminotransferase family. HemL subfamily. As to quaternary structure, homodimer. The cofactor is pyridoxal 5'-phosphate.

The protein localises to the cytoplasm. The catalysed reaction is (S)-4-amino-5-oxopentanoate = 5-aminolevulinate. Its pathway is porphyrin-containing compound metabolism; protoporphyrin-IX biosynthesis; 5-aminolevulinate from L-glutamyl-tRNA(Glu): step 2/2. It functions in the pathway porphyrin-containing compound metabolism; chlorophyll biosynthesis. The protein is Glutamate-1-semialdehyde 2,1-aminomutase of Chlorobium phaeobacteroides (strain BS1).